The following is a 140-amino-acid chain: UPF0251 protein Athe_2281 (140 aa).

Belongs to the UPF0251 family.

This chain is UPF0251 protein Athe_2281, found in Caldicellulosiruptor bescii (strain ATCC BAA-1888 / DSM 6725 / KCTC 15123 / Z-1320) (Anaerocellum thermophilum).